We begin with the raw amino-acid sequence, 276 residues long: MESHLQKRKDSRKPLRIKVISMGNAEVGKSCIIKRYCEKRFVPKYQATIGIDYGVTKVQIKDREIKVNIFDMAGHPFFYEVRNEFYKDTQGVILVYDVGQKESFESLDAWLAEMKQELGPQINIDNLDNIVFAVCANKIDSTKHRCVDESEGRLWSESKGFLYFETSAQSGEGINEMFQAFYSSIVDLCDNGGKRPVSAINIGFTKEQADSIRRIRNSKDSWDMLGVKPGATRDEVNKAYRKLAVLLHPDKCVAPGSEDAFKAVVNARTALLKNIK.

GTP contacts are provided by residues 23 to 30, 71 to 75, and 137 to 140; these read GNAEVGKS, DMAGH, and NKID. A J domain is found at 220-276; the sequence is DSWDMLGVKPGATRDEVNKAYRKLAVLLHPDKCVAPGSEDAFKAVVNARTALLKNIK.

This sequence belongs to the small GTPase superfamily. Rab family.

The protein localises to the nucleus. GTPase possibly involved in regulation of the MEK/ERK pathway. The chain is DnaJ homolog subfamily C member 27-B (dnajc27-b) from Xenopus laevis (African clawed frog).